Reading from the N-terminus, the 821-residue chain is Envelope glycoprotein gp160 (821 aa).

Over 1-737 (MSTGNVYQEL…FTWWVQYLKW (737 aa)) the chain is Extracellular. Cysteine 67 and cysteine 80 form a disulfide bridge. Asparagine 71, asparagine 98, asparagine 144, asparagine 175, asparagine 190, asparagine 215, asparagine 224, asparagine 266, asparagine 287, asparagine 333, asparagine 383, asparagine 389, asparagine 394, asparagine 423, asparagine 447, and asparagine 516 each carry an N-linked (GlcNAc...) asparagine; by host glycan. 4 cysteine pairs are disulfide-bonded: cysteine 127–cysteine 232, cysteine 134–cysteine 223, cysteine 139–cysteine 187, and cysteine 244–cysteine 272. Residues 139 to 186 (CQETENVSATTAKPITTPTTTSTVASSTEIYLDVDKNNTEEKVERNHV) form a V1 region. The interval 187–223 (CRYNITGLCRDSKEEIVTNFRGDDVKCENNTCYMNHC) is V2. The interval 328–361 (CHRKGNRSVVSTPSATGLLFYHGLEPGKNLKKGM) is V3. 2 disulfides stabilise this stretch: cysteine 439/cysteine 499 and cysteine 446/cysteine 469. Residues 446–469 (CNVTRIMRAWNDPNEKKWYPYASC) are V4. Positions 515–526 (SNETKMQIKFLP) are V5. A fusion peptide region spans residues 570-590 (GAVILGILGLLSLAGSAMGSV). A coiled-coil region spans residues 607-627 (EQQKQLLKLIEQQSELLKLTI). 3 N-linked (GlcNAc...) asparagine; by host glycosylation sites follow: asparagine 669, asparagine 675, and asparagine 694. The MPER; binding to GalCer stretch occupies residues 715-736 (KLGDLTSWASWFDFTWWVQYLK). The chain crosses the membrane as a helical span at residues 738–758 (GVFLVLGIIGLRILLALWNTI). Over 759 to 821 (SRFRQGYRPV…IEDLTSFARE (63 aa)) the chain is Cytoplasmic. A YXXV motif; contains endocytosis signal motif is present at residues 765–768 (YRPV). Residues 780–805 (KRPDNGEEESNSLELGEHNSENLKEE) are disordered. Over residues 794–805 (LGEHNSENLKEE) the composition is skewed to basic and acidic residues.

The mature envelope protein (Env) consists of a homotrimer of non-covalently associated gp120-gp41 heterodimers. The resulting complex protrudes from the virus surface as a spike. Interacts with host CD4 and CCR5. Gp120 also interacts with the C-type lectins CD209/DC-SIGN and CLEC4M/DC-SIGNR (collectively referred to as DC-SIGN(R)). In terms of assembly, the mature envelope protein (Env) consists of a homotrimer of non-covalently associated gp120-gp41 heterodimers. The resulting complex protrudes from the virus surface as a spike. In terms of processing, specific enzymatic cleavages in vivo yield mature proteins. Envelope glycoproteins are synthesized as an inactive precursor that is heavily N-glycosylated and processed likely by host cell furin in the Golgi to yield the mature SU and TM proteins. The cleavage site between SU and TM requires the minimal sequence [KR]-X-[KR]-R.

Its subcellular location is the virion membrane. It localises to the host cell membrane. The protein resides in the host endosome membrane. Functionally, the surface protein gp120 (SU) attaches the virus to the host lymphoid cell by binding to the primary receptor CD4. This interaction induces a structural rearrangement creating a high affinity binding site for a chemokine coreceptor like CCR5. This peculiar 2 stage receptor-interaction strategy allows gp120 to maintain the highly conserved coreceptor-binding site in a cryptic conformation, protected from neutralizing antibodies. These changes are transmitted to the transmembrane protein gp41 and are thought to activate its fusogenic potential by unmasking its fusion peptide. Surface protein gp120 (SU) may target the virus to gut-associated lymphoid tissue (GALT) by binding host ITGA4/ITGB7 (alpha-4/beta-7 integrins), a complex that mediates T-cell migration to the GALT. Interaction between gp120 and ITGA4/ITGB7 would allow the virus to enter GALT early in the infection, infecting and killing most of GALT's resting CD4+ T-cells. This T-cell depletion is believed to be the major insult to the host immune system leading to AIDS. Its function is as follows. The surface protein gp120 is a ligand for CD209/DC-SIGN and CLEC4M/DC-SIGNR, which are respectively found on dendritic cells (DCs), and on endothelial cells of liver sinusoids and lymph node sinuses. These interactions allow capture of viral particles at mucosal surfaces by these cells and subsequent transmission to permissive cells. DCs are professional antigen presenting cells, critical for host immunity by inducing specific immune responses against a broad variety of pathogens. They act as sentinels in various tissues where they take up antigen, process it, and present it to T-cells following migration to lymphoid organs. SIV subverts the migration properties of dendritic cells to gain access to CD4+ T-cells in lymph nodes. Virus transmission to permissive T-cells occurs either in trans (without DCs infection, through viral capture and transmission), or in cis (following DCs productive infection, through the usual CD4-gp120 interaction), thereby inducing a robust infection. In trans infection, bound virions remain infectious over days and it is proposed that they are not degraded, but protected in non-lysosomal acidic organelles within the DCs close to the cell membrane thus contributing to the viral infectious potential during DCs' migration from the periphery to the lymphoid tissues. On arrival at lymphoid tissues, intact virions recycle back to DCs' cell surface allowing virus transmission to CD4+ T-cells. Virion capture also seems to lead to MHC-II-restricted viral antigen presentation, and probably to the activation of SIV-specific CD4+ cells. In terms of biological role, the transmembrane protein gp41 (TM) acts as a class I viral fusion protein. Under the current model, the protein has at least 3 conformational states: pre-fusion native state, pre-hairpin intermediate state, and post-fusion hairpin state. During fusion of viral and target intracellular membranes, the coiled coil regions (heptad repeats) assume a trimer-of-hairpins structure, positioning the fusion peptide in close proximity to the C-terminal region of the ectodomain. The formation of this structure appears to drive apposition and subsequent fusion of viral and target cell membranes. Complete fusion occurs in host cell endosomes. The virus undergoes clathrin-dependent internalization long before endosomal fusion, thus minimizing the surface exposure of conserved viral epitopes during fusion and reducing the efficacy of inhibitors targeting these epitopes. Membranes fusion leads to delivery of the nucleocapsid into the cytoplasm. Functionally, the envelope glycoprotein gp160 precursor down-modulates cell surface CD4 antigen by interacting with it in the endoplasmic reticulum and blocking its transport to the cell surface. The gp120-gp41 heterodimer allows rapid transcytosis of the virus through CD4 negative cells such as simple epithelial monolayers of the intestinal, rectal and endocervical epithelial barriers. Both gp120 and gp41 specifically recognize glycosphingolipids galactosyl-ceramide (GalCer) or 3' sulfo-galactosyl-ceramide (GalS) present in the lipid rafts structures of epithelial cells. Binding to these alternative receptors allows the rapid transcytosis of the virus through the epithelial cells. This transcytotic vesicle-mediated transport of virions from the apical side to the basolateral side of the epithelial cells does not involve infection of the cells themselves. The chain is Envelope glycoprotein gp160 (env) from Cercopithecidae (Old World monkeys).